Reading from the N-terminus, the 322-residue chain is Adenine deaminase (322 aa).

Zn(2+) contacts are provided by His11, His13, and His189. The active-site Proton donor is Glu192. Asp270 lines the Zn(2+) pocket. Residue Asp271 coordinates substrate.

It belongs to the metallo-dependent hydrolases superfamily. Adenosine and AMP deaminases family. Adenine deaminase type 2 subfamily. The cofactor is Zn(2+).

The catalysed reaction is adenine + H2O + H(+) = hypoxanthine + NH4(+). Catalyzes the hydrolytic deamination of adenine to hypoxanthine. Plays an important role in the purine salvage pathway and in nitrogen catabolism. This is Adenine deaminase from Rhizobium etli (strain ATCC 51251 / DSM 11541 / JCM 21823 / NBRC 15573 / CFN 42).